A 496-amino-acid chain; its full sequence is uncharacterized protein (496 aa).

The next 13 membrane-spanning stretches (helical) occupy residues 5–25 (LTALLITAIIVLTVVCIGFLA), 45–65 (FGGLLVWFLVGADLYTAYTFL), 77–97 (VAFFAIPYSVLAYFIAYFFLP), 127–147 (LVAIVGVLMLIPYICLQLSGI), 161–181 (VKFVVIISFILVALYTFFSGI), 193–213 (ILVWVIMLFMVVSLPLIHFNG), 239–259 (IPWFITASIVSALALFMWAHA), 278–298 (FLPLYNIVLILVIFLGFIAFL), 325–345 (FAYATIALASLIPCSIMAIGA), 374–394 (MVFVVIGLALLFGMLFPTALV), 396–416 (LQLLGVSGMVQIFPAIAVSLF), 424–444 (ATVIGLLAGLAVTFIVYITQS), and 450–470 (EGFWGLAANMIAVVILNPLFV).

It belongs to the sodium:solute symporter (SSF) (TC 2.A.21) family.

It localises to the cell membrane. This is an uncharacterized protein from Bacillus subtilis (strain 168).